The chain runs to 394 residues: Phosphopentomutase (394 aa).

Residues D10, D282, H287, D323, H324, and H335 each coordinate Mn(2+).

This sequence belongs to the phosphopentomutase family. Mn(2+) is required as a cofactor.

The protein resides in the cytoplasm. It carries out the reaction 2-deoxy-alpha-D-ribose 1-phosphate = 2-deoxy-D-ribose 5-phosphate. The catalysed reaction is alpha-D-ribose 1-phosphate = D-ribose 5-phosphate. It functions in the pathway carbohydrate degradation; 2-deoxy-D-ribose 1-phosphate degradation; D-glyceraldehyde 3-phosphate and acetaldehyde from 2-deoxy-alpha-D-ribose 1-phosphate: step 1/2. In terms of biological role, isomerase that catalyzes the conversion of deoxy-ribose 1-phosphate (dRib-1-P) and ribose 1-phosphate (Rib-1-P) to deoxy-ribose 5-phosphate (dRib-5-P) and ribose 5-phosphate (Rib-5-P), respectively. In Dictyoglomus turgidum (strain DSM 6724 / Z-1310), this protein is Phosphopentomutase.